The chain runs to 143 residues: Large ribosomal subunit protein uL11 (143 aa).

Belongs to the universal ribosomal protein uL11 family. As to quaternary structure, part of the ribosomal stalk of the 50S ribosomal subunit. Interacts with L10 and the large rRNA to form the base of the stalk. L10 forms an elongated spine to which L12 dimers bind in a sequential fashion forming a multimeric L10(L12)X complex. In terms of processing, one or more lysine residues are methylated.

In terms of biological role, forms part of the ribosomal stalk which helps the ribosome interact with GTP-bound translation factors. This chain is Large ribosomal subunit protein uL11, found in Kineococcus radiotolerans (strain ATCC BAA-149 / DSM 14245 / SRS30216).